Here is a 34-residue protein sequence, read N- to C-terminus: Leader peptide SpeFL (34 aa).

The Ornithine recognition loop motif lies at 10–16 (HIRRTTH). Arginine 13 contacts L-ornithine.

This sequence belongs to the speF operon leader peptide family. Binds ornithine in stalled 70S ribosomes, blocking the upper two-thirds of the exit tunnel. Contacts 23S rRNA and ribosomal proteins L4 and L22.

Its function is as follows. A small protein (arrest peptide) encoded upstream of inducible ornithine carboxylase gene (speF) that controls expression of downstream genes (speF and potE) by transcriptional and translational attenuation. Its expression controls transcription and translation of downstream SpeF; translation pausing at low Arg levels on this mRNA prevents premature Rho-dependent transcription termination of speF and also enhances SprF translation by preventing sequestration of its ribosome-binding site. In the presence of high Arg levels translation of this protein allows the formation of an speF mRNA structure that is degraded by RNase G. In Salmonella typhimurium (strain SL1344), this protein is Leader peptide SpeFL.